A 222-amino-acid chain; its full sequence is Collectrin (222 aa).

The first 14 residues, 1–14 (MLWLLFFLVTAIHA), serve as a signal peptide directing secretion. At 15 to 141 (ELCQPGAENA…LAPPMDPSVP (127 aa)) the chain is on the extracellular side. Residues 21 to 222 (AENAFKVRLS…MTEDERLTPL (202 aa)) enclose the Collectrin-like domain. Asparagine 76 and asparagine 93 each carry an N-linked (GlcNAc...) asparagine glycan. A helical membrane pass occupies residues 142-162 (IWIIIFGVIFCIIIVAIALLI). The Cytoplasmic portion of the chain corresponds to 163 to 222 (LSGIWQRRRKNKEPSEVDDAEDKCENMITIENGIPSDPLDMKGGHINDAFMTEDERLTPL). Phosphothreonine is present on residues threonine 214 and threonine 220.

The protein belongs to the CLTRN family. In terms of assembly, monomer. Homodimer; dimerization prevents CLTRN cleavage by BACE2. Interacts with SLC6A18; this interaction regulates the trafficking of SLC6A18 to the cell membrane and its amino acid transporter activity. Interacts with SLC6A19; this interaction regulates the trafficking of SLC6A19 to the cell membrane and its amino acid transporter activity. Interacts with SNAPIN. In terms of processing, glycosylated. Glycosylation is required for plasma membrane localization and for its cleavage by BACE2. Proteolytically processed in pancreatic beta cells by BACE2 leading to the generation and extracellular release of soluble CLTRN, and a corresponding cell-associated C-terminal fragment which is later cleaved by gamma-secretase. This shedding process inactivates CLTRN. Three cleavage sites have been identified for BACE2, two clustered sites after Phe-116 and Leu-118 and a more membrane proximal site at Phe-125; the preferred BACE2 cleavage site seems to be between Phe-125 and Leu-126, Phe-116 and Leu-118 act as alternative sites. In terms of tissue distribution, kidney; collecting ducts. Pancreas; beta cells of islets.

It is found in the cell membrane. In terms of biological role, plays an important role in amino acid transport by acting as binding partner of amino acid transporters SLC6A18 and SLC6A19, regulating their trafficking on the cell surface and their amino acid transporter activity. May also play a role in trafficking of amino acid transporters SLC3A1 and SLC7A9 to the renal cortical cell membrane. Regulator of SNARE complex function. Stimulator of beta cell replication. The polypeptide is Collectrin (Homo sapiens (Human)).